Reading from the N-terminus, the 294-residue chain is 1,4-dihydroxy-2-naphthoate octaprenyltransferase (294 aa).

The next 6 membrane-spanning stretches (helical) occupy residues 35 to 55, 103 to 123, 140 to 160, 166 to 186, 220 to 240, and 272 to 292; these read SAVW…VIGV, AGLA…ATCI, GFGE…GTEY, VDWV…SVLV, LLVA…WCAV, and GLAM…AGSV.

Belongs to the MenA family. Type 1 subfamily.

The protein resides in the cell membrane. The catalysed reaction is an all-trans-polyprenyl diphosphate + 1,4-dihydroxy-2-naphthoate + H(+) = a 2-demethylmenaquinol + CO2 + diphosphate. It functions in the pathway quinol/quinone metabolism; menaquinone biosynthesis; menaquinol from 1,4-dihydroxy-2-naphthoate: step 1/2. Its function is as follows. Conversion of 1,4-dihydroxy-2-naphthoate (DHNA) to demethylmenaquinone (DMK). This is 1,4-dihydroxy-2-naphthoate octaprenyltransferase from Mycobacterium leprae (strain TN).